The primary structure comprises 157 residues: SsrA-binding protein (157 aa).

The tract at residues 135 to 157 is disordered; the sequence is KRDTIKDREGKREVERAMKTNHR.

Belongs to the SmpB family.

Its subcellular location is the cytoplasm. In terms of biological role, required for rescue of stalled ribosomes mediated by trans-translation. Binds to transfer-messenger RNA (tmRNA), required for stable association of tmRNA with ribosomes. tmRNA and SmpB together mimic tRNA shape, replacing the anticodon stem-loop with SmpB. tmRNA is encoded by the ssrA gene; the 2 termini fold to resemble tRNA(Ala) and it encodes a 'tag peptide', a short internal open reading frame. During trans-translation Ala-aminoacylated tmRNA acts like a tRNA, entering the A-site of stalled ribosomes, displacing the stalled mRNA. The ribosome then switches to translate the ORF on the tmRNA; the nascent peptide is terminated with the 'tag peptide' encoded by the tmRNA and targeted for degradation. The ribosome is freed to recommence translation, which seems to be the essential function of trans-translation. This is SsrA-binding protein from Albidiferax ferrireducens (strain ATCC BAA-621 / DSM 15236 / T118) (Rhodoferax ferrireducens).